The primary structure comprises 350 residues: Biotin synthase (350 aa).

One can recognise a Radical SAM core domain in the interval 41 to 268 (NEVQISRLLS…LSRVRLSAGR (228 aa)). 3 residues coordinate [4Fe-4S] cluster: cysteine 56, cysteine 60, and cysteine 63. 4 residues coordinate [2Fe-2S] cluster: cysteine 100, cysteine 131, cysteine 191, and arginine 263.

This sequence belongs to the radical SAM superfamily. Biotin synthase family. As to quaternary structure, homodimer. [4Fe-4S] cluster is required as a cofactor. [2Fe-2S] cluster serves as cofactor.

The enzyme catalyses (4R,5S)-dethiobiotin + (sulfur carrier)-SH + 2 reduced [2Fe-2S]-[ferredoxin] + 2 S-adenosyl-L-methionine = (sulfur carrier)-H + biotin + 2 5'-deoxyadenosine + 2 L-methionine + 2 oxidized [2Fe-2S]-[ferredoxin]. Its pathway is cofactor biosynthesis; biotin biosynthesis; biotin from 7,8-diaminononanoate: step 2/2. In terms of biological role, catalyzes the conversion of dethiobiotin (DTB) to biotin by the insertion of a sulfur atom into dethiobiotin via a radical-based mechanism. In Shewanella oneidensis (strain ATCC 700550 / JCM 31522 / CIP 106686 / LMG 19005 / NCIMB 14063 / MR-1), this protein is Biotin synthase.